The primary structure comprises 272 residues: Ribosomal RNA small subunit methyltransferase A (272 aa).

Residues asparagine 20, leucine 22, glycine 47, glutamate 68, aspartate 93, and asparagine 114 each coordinate S-adenosyl-L-methionine.

It belongs to the class I-like SAM-binding methyltransferase superfamily. rRNA adenine N(6)-methyltransferase family. RsmA subfamily.

The protein resides in the cytoplasm. It catalyses the reaction adenosine(1518)/adenosine(1519) in 16S rRNA + 4 S-adenosyl-L-methionine = N(6)-dimethyladenosine(1518)/N(6)-dimethyladenosine(1519) in 16S rRNA + 4 S-adenosyl-L-homocysteine + 4 H(+). Functionally, specifically dimethylates two adjacent adenosines (A1518 and A1519) in the loop of a conserved hairpin near the 3'-end of 16S rRNA in the 30S particle. May play a critical role in biogenesis of 30S subunits. The sequence is that of Ribosomal RNA small subunit methyltransferase A from Aliivibrio fischeri (strain ATCC 700601 / ES114) (Vibrio fischeri).